The primary structure comprises 504 residues: Hexose transporter 1 (504 aa).

Residues 1–29 are Cytoplasmic-facing; it reads MTKSSKDICSENEGKKNGKSGFFSTSFKY. Residues 30-50 traverse the membrane as a helical segment; that stretch reads VLSACIASFIFGYQVSVLNTI. Over 51 to 78 the chain is Extracellular; the sequence is KNFIVVEFEWCKGEKDRLNCSNNTIQSS. The cysteines at positions 61 and 70 are disulfide-linked. Residues 79–99 traverse the membrane as a helical segment; it reads FLLASVFIGAVLGCGFSGYLV. Residues 100 to 104 are Cytoplasmic-facing; it reads QFGRR. The chain crosses the membrane as a helical span at residues 105 to 125; sequence LSLLIIYNFFFLVSILTSITH. The Extracellular portion of the chain corresponds to 126-129; the sequence is HFHT. The helical transmembrane segment at 130 to 150 threads the bilayer; sequence ILFARLLSGFGIGLVTVSVPM. Over 151–165 the chain is Cytoplasmic; that stretch reads YISEMTHKDKKGAYG. Residues 166–186 form a helical membrane-spanning segment; sequence VMHQLFITFGIFVAVMLGLAM. Gln169 is a binding site for alpha-D-glucose. Gln169 lines the beta-D-glucose pocket. Residues 187–207 lie on the Extracellular side of the membrane; that stretch reads GEGPKADSTEPLTSFAKLWWR. A helical transmembrane segment spans residues 208 to 228; it reads LMFLFPSVISLIGILALVVFF. Topologically, residues 229–293 are cytoplasmic; sequence KEETPYFLFE…SALKIPSYRY (65 aa). The helical transmembrane segment at 294–314 threads the bilayer; it reads VIILGCLLSGLQQFTGINVLV. Alpha-D-glucose contacts are provided by Gln305, Gln306, and Asn311. Gln305 is a binding site for beta-D-glucose. Asn311 provides a ligand contact to beta-D-glucose. Over 315–331 the chain is Extracellular; the sequence is SNSNELYKEFLDSHLIT. A helical membrane pass occupies residues 332-352; the sequence is ILSVVMTAVNFLMTFPAIYIV. Asn341 lines the beta-D-glucose pocket. Topologically, residues 353-358 are cytoplasmic; that stretch reads EKLGRK. Residues 359 to 379 form a helical membrane-spanning segment; it reads TLLLWGCVGVLVAYLPTAIAN. At 380 to 392 the chain is on the extracellular side; that stretch reads EINRNSNFVKILS. The chain crosses the membrane as a helical span at residues 393 to 413; that stretch reads IVATFVMIISFAVSYGPVLWI. Trp412 is a binding site for alpha-D-glucose. At 414–429 the chain is on the cytoplasmic side; that stretch reads YLHEMFPSEIKDSAAS. Residues 430 to 450 form a helical membrane-spanning segment; it reads LASLVNWVCAIIVVFPSDIII. The Extracellular portion of the chain corresponds to 451-455; that stretch reads KKSPS. The chain crosses the membrane as a helical span at residues 456-476; it reads ILFIVFSVMSILTFFFIFFFI. Residues 477–504 are Cytoplasmic-facing; that stretch reads KETKGGEIGTSPYITMEERQKHMTKSVV.

This sequence belongs to the major facilitator superfamily. Sugar transporter (TC 2.A.1.1) family. Homodimer.

It localises to the cell membrane. The catalysed reaction is D-glucose(out) = D-glucose(in). The enzyme catalyses D-fructose(out) = D-fructose(in). It catalyses the reaction D-galactose(in) = D-galactose(out). It carries out the reaction D-mannose(out) = D-mannose(in). The catalysed reaction is D-glucosamine(out) = D-glucosamine(in). The enzyme catalyses D-xylose(out) = D-xylose(in). With respect to regulation, inhibited by cytochalasin B. Inhibited by compound 3361 (3-O-((undec-10-en)-1-yl)-D-glucose). Inhibited by compound HTI-1. In terms of biological role, sodium-independent facilitative hexose transporter. Can transport D-glucose and D-fructose. Can transport D-mannose, D-galactose, D-xylose and D-glucosamine. This is Hexose transporter 1 from Plasmodium falciparum (isolate 3D7).